The primary structure comprises 346 residues: Putative F-box/kelch-repeat protein At1g27420 (346 aa).

Residues 9-56 (PIIPGLTDDVAELCVSKIPRSSFQITSQVCRRWRSFLRSQHFAAVRKL) enclose the F-box domain. Kelch repeat units follow at residues 62–109 (EFLC…VLDG), 111–167 (KIVF…EVNG), 168–215 (LLYV…AFSS), 217–257 (LYAV…VRNK), and 259–300 (YFMD…VWNN).

This Arabidopsis thaliana (Mouse-ear cress) protein is Putative F-box/kelch-repeat protein At1g27420.